The sequence spans 122 residues: UPF0102 protein CLL_A1253 (122 aa).

This sequence belongs to the UPF0102 family.

This Clostridium botulinum (strain Eklund 17B / Type B) protein is UPF0102 protein CLL_A1253.